The chain runs to 1033 residues: RNA cytidine acetyltransferase (1033 aa).

ATP is bound by residues 285–294 and arginine 465; that span reads GRGKSAALGL. The 135-residue stretch at 560–694 folds into the N-acetyltransferase domain; the sequence is VDLKNPKLPD…IHVRDAKTMP (135 aa). Acetyl-CoA contacts are provided by residues 626-628, 633-639, and arginine 727; these read IAV and VKMGYGT. The tract at residues 988–1033 is disordered; sequence ENQIQKTNGKGARVVSIKGEKRKNNSLDASDKKTKEKPSSKKKFRK. Positions 1005–1026 are enriched in basic and acidic residues; the sequence is KGEKRKNNSLDASDKKTKEKPS.

Belongs to the RNA cytidine acetyltransferase family. NAT10 subfamily. In terms of assembly, interacts with tan1.

It localises to the nucleus. The protein localises to the nucleolus. It catalyses the reaction a cytidine in 18S rRNA + acetyl-CoA + ATP + H2O = an N(4)-acetylcytidine in 18S rRNA + ADP + phosphate + CoA + H(+). The catalysed reaction is a cytidine in tRNA + acetyl-CoA + ATP + H2O = an N(4)-acetylcytidine in tRNA + ADP + phosphate + CoA + H(+). Functionally, RNA cytidine acetyltransferase with specificity toward both 18S rRNA and tRNAs. Catalyzes the formation of N(4)-acetylcytidine (ac4C) at positions 1297 and 1815 in 18S rRNA. Required for early nucleolar cleavages of precursor rRNA at sites A0, A1 and A2 during 18S rRNA synthesis. Catalyzes the formation of ac4C in serine and leucine tRNAs. Requires the tRNA-binding adapter protein tan1 for full tRNA acetyltransferase activity but not for 18S rRNA acetylation. The protein is RNA cytidine acetyltransferase of Schizosaccharomyces pombe (strain 972 / ATCC 24843) (Fission yeast).